We begin with the raw amino-acid sequence, 229 residues long: Peptidase E (229 aa).

Active-site charge relay system residues include Ser120, Asp135, and His157.

This sequence belongs to the peptidase S51 family.

Its subcellular location is the cytoplasm. The catalysed reaction is Dipeptidase E catalyzes the hydrolysis of dipeptides Asp-|-Xaa. It does not act on peptides with N-terminal Glu, Asn or Gln, nor does it cleave isoaspartyl peptides.. Its function is as follows. Hydrolyzes dipeptides containing N-terminal aspartate residues. May play a role in allowing the cell to use peptide aspartate to spare carbon otherwise required for the synthesis of the aspartate family of amino acids. This Citrobacter koseri (strain ATCC BAA-895 / CDC 4225-83 / SGSC4696) protein is Peptidase E.